The chain runs to 227 residues: Putative ankyrin repeat protein L45 (227 aa).

6 ANK repeats span residues 38–66, 78–107, 108–137, 139–167, 168–197, and 199–227; these read FETN…NINH, CLEE…NIFH, NENC…DVRA, NDYA…DVRS, CDSY…NYRA, and NHHA…GITK.

In Acanthamoeba polyphaga mimivirus (APMV), this protein is Putative ankyrin repeat protein L45.